A 162-amino-acid chain; its full sequence is NADH-quinone oxidoreductase subunit C (162 aa).

Belongs to the complex I 30 kDa subunit family. NDH-1 is composed of 14 different subunits. Subunits NuoB, C, D, E, F, and G constitute the peripheral sector of the complex.

It localises to the cell inner membrane. It catalyses the reaction a quinone + NADH + 5 H(+)(in) = a quinol + NAD(+) + 4 H(+)(out). NDH-1 shuttles electrons from NADH, via FMN and iron-sulfur (Fe-S) centers, to quinones in the respiratory chain. The immediate electron acceptor for the enzyme in this species is believed to be ubiquinone. Couples the redox reaction to proton translocation (for every two electrons transferred, four hydrogen ions are translocated across the cytoplasmic membrane), and thus conserves the redox energy in a proton gradient. The protein is NADH-quinone oxidoreductase subunit C of Geobacter sulfurreducens (strain ATCC 51573 / DSM 12127 / PCA).